A 431-amino-acid polypeptide reads, in one-letter code: Glutamyl-tRNA(Gln) amidotransferase subunit A (431 aa).

Residues lysine 55 and serine 130 each act as charge relay system in the active site. Serine 154 serves as the catalytic Acyl-ester intermediate.

The protein belongs to the amidase family. GatA subfamily. Heterotrimer of A, B and C subunits.

It catalyses the reaction L-glutamyl-tRNA(Gln) + L-glutamine + ATP + H2O = L-glutaminyl-tRNA(Gln) + L-glutamate + ADP + phosphate + H(+). In terms of biological role, allows the formation of correctly charged Gln-tRNA(Gln) through the transamidation of misacylated Glu-tRNA(Gln) in organisms which lack glutaminyl-tRNA synthetase. The reaction takes place in the presence of glutamine and ATP through an activated gamma-phospho-Glu-tRNA(Gln). The chain is Glutamyl-tRNA(Gln) amidotransferase subunit A from Methanococcus maripaludis (strain C5 / ATCC BAA-1333).